The following is a 456-amino-acid chain: MSDLTPAEIVIELDKYIVGQAKAKRSVAIALRNRWRRRQVPEAMREEIAPKNIILIGPTGVGKTEIARRLARLTDSPFLKIEASKFTEVGYVGRDVESMVRDLVELTVTHLKVSEREAVREKAVRLAEERILDVLLPRPEGPQRADGDEPLGSHIEIVSDDDGRVSTREKLRTMLRAGKLKDRYVDLELADRSMPMVEIFSNSGLEEMGVNFKDMFAGLLPKNKKRRKVKVPEALEMLTDEEAQNLVDMDRVVRMAVEKVEQSGIIFLDEIDKIVATSKGSGPDVSREGVQRDLLPIVEGSTVMTKHGAVKTDHILFIASGAFHMCKPSDLIPELQGRFPIRVELDALGKEEFFRILIEPENALLLQYIELLRTEGVDVAFADEAVREIAAMAEEVNAGTENIGARRLHTLMEYLLEDLLFDAPDRAGTKVAIDRAYVTDRLKTIRGNEDLSRFIL.

ATP-binding positions include valine 18, 60-65 (GVGKTE), aspartate 269, glutamate 334, and arginine 406.

Belongs to the ClpX chaperone family. HslU subfamily. As to quaternary structure, a double ring-shaped homohexamer of HslV is capped on each side by a ring-shaped HslU homohexamer. The assembly of the HslU/HslV complex is dependent on binding of ATP.

The protein resides in the cytoplasm. In terms of biological role, ATPase subunit of a proteasome-like degradation complex; this subunit has chaperone activity. The binding of ATP and its subsequent hydrolysis by HslU are essential for unfolding of protein substrates subsequently hydrolyzed by HslV. HslU recognizes the N-terminal part of its protein substrates and unfolds these before they are guided to HslV for hydrolysis. The chain is ATP-dependent protease ATPase subunit HslU from Desulfosudis oleivorans (strain DSM 6200 / JCM 39069 / Hxd3) (Desulfococcus oleovorans).